Reading from the N-terminus, the 394-residue chain is MAEIKNYYFSSESVTEGHPDKICDAVSDAVLDECLKQDPNSRVACETLAKTGMIMIAGEITTKAKLDYQKIARDTVRRIGYTSSDMGFDADTCAVMESIAEQSPDIDMGVSAGKGLFNSESSNVSEGAGDQGIMFGYAINETETFMPLTIHLAHRLAERLTKVRKDKVVDYLRPDGKSQVTVEYKDGKAARIEAVVISTQHAAGVDHKQIEADIKKYVINEICPANMLDSNTKYYINPTGSFVVGGPMGDCGLTGRKIIVDSYGGHGAHGGGAFSGKDPTKVDRSACYMARYVAKNIVASGIADRALVQFAYAIGVPEPLSVYVNTFGTAKVHDEVLANIVSKELDLTPAGIIKRLDLRRPIYEKTTAYGHFGRELPEFTWEKTDIKDLFANAK.

An ATP-binding site is contributed by His18. A Mg(2+)-binding site is contributed by Asp20. Residue Glu46 coordinates K(+). 2 residues coordinate L-methionine: Glu59 and Gln102. Residues 102-112 (QSPDIDMGVSA) form a flexible loop region. Residues 175–177 (DGK), Asp250, 256–257 (RK), Ala273, and Lys277 contribute to the ATP site. Asp250 contacts L-methionine. L-methionine is bound at residue Lys281.

This sequence belongs to the AdoMet synthase family. Homotetramer; dimer of dimers. It depends on Mg(2+) as a cofactor. K(+) serves as cofactor.

The protein localises to the cytoplasm. The catalysed reaction is L-methionine + ATP + H2O = S-adenosyl-L-methionine + phosphate + diphosphate. It participates in amino-acid biosynthesis; S-adenosyl-L-methionine biosynthesis; S-adenosyl-L-methionine from L-methionine: step 1/1. Catalyzes the formation of S-adenosylmethionine (AdoMet) from methionine and ATP. The overall synthetic reaction is composed of two sequential steps, AdoMet formation and the subsequent tripolyphosphate hydrolysis which occurs prior to release of AdoMet from the enzyme. The polypeptide is S-adenosylmethionine synthase (Brachyspira hyodysenteriae (strain ATCC 49526 / WA1)).